We begin with the raw amino-acid sequence, 179 residues long: Large ribosomal subunit protein uL5 (179 aa).

Belongs to the universal ribosomal protein uL5 family. In terms of assembly, part of the 50S ribosomal subunit; part of the 5S rRNA/L5/L18/L25 subcomplex. Contacts the 5S rRNA and the P site tRNA. Forms a bridge to the 30S subunit in the 70S ribosome.

Its function is as follows. This is one of the proteins that bind and probably mediate the attachment of the 5S RNA into the large ribosomal subunit, where it forms part of the central protuberance. In the 70S ribosome it contacts protein S13 of the 30S subunit (bridge B1b), connecting the 2 subunits; this bridge is implicated in subunit movement. Contacts the P site tRNA; the 5S rRNA and some of its associated proteins might help stabilize positioning of ribosome-bound tRNAs. The sequence is that of Large ribosomal subunit protein uL5 from Burkholderia cenocepacia (strain HI2424).